Consider the following 375-residue polypeptide: Alcohol dehydrogenase 1 (375 aa).

Position 2 is an N-acetylserine (S2). Zn(2+) contacts are provided by C47, H68, C98, C101, C104, C112, and C175. NAD(+) is bound by residues 200–205 (WSGRVG), D224, and K229. An N6-succinyllysine modification is found at K234. An NAD(+)-binding site is contributed by 293-295 (VGV). K340 carries the N6-succinyllysine modification. R370 provides a ligand contact to NAD(+).

It belongs to the zinc-containing alcohol dehydrogenase family. Class-I subfamily. As to quaternary structure, homodimer. It depends on Zn(2+) as a cofactor.

The protein localises to the cytoplasm. It carries out the reaction a primary alcohol + NAD(+) = an aldehyde + NADH + H(+). The enzyme catalyses a secondary alcohol + NAD(+) = a ketone + NADH + H(+). The polypeptide is Alcohol dehydrogenase 1 (ADH1) (Geomys attwateri (Attwater's pocket gopher)).